Here is a 236-residue protein sequence, read N- to C-terminus: 2,3,4,5-tetrahydropyridine-2,6-dicarboxylate N-acetyltransferase (236 aa).

Belongs to the transferase hexapeptide repeat family. DapH subfamily.

The enzyme catalyses (S)-2,3,4,5-tetrahydrodipicolinate + acetyl-CoA + H2O = L-2-acetamido-6-oxoheptanedioate + CoA. It participates in amino-acid biosynthesis; L-lysine biosynthesis via DAP pathway; LL-2,6-diaminopimelate from (S)-tetrahydrodipicolinate (acetylase route): step 1/3. Its function is as follows. Catalyzes the transfer of an acetyl group from acetyl-CoA to tetrahydrodipicolinate. In Bacillus subtilis (strain 168), this protein is 2,3,4,5-tetrahydropyridine-2,6-dicarboxylate N-acetyltransferase.